A 177-amino-acid polypeptide reads, in one-letter code: Non-specific lipid transfer protein GPI-anchored 22 (177 aa).

The signal sequence occupies residues 1-29 (MARFMAYNQNPQMLALCITVAVMFLGVRS). Intrachain disulfides connect Cys-38–Cys-81, Cys-48–Cys-63, Cys-64–Cys-108, and Cys-79–Cys-117. Asn-113 carries an N-linked (GlcNAc...) asparagine glycan. Ser-152 carries the GPI-anchor amidated serine lipid modification. A propeptide spans 153-177 (SSIKGRDNKQFGLMMAGALSIWYIM) (removed in mature form).

It belongs to the plant LTP family. As to expression, expressed in seedlings, preferentially in hypocotyls and roots. Also observed in siliques.

Its subcellular location is the cell membrane. In terms of biological role, probable lipid transfer protein. In Arabidopsis thaliana (Mouse-ear cress), this protein is Non-specific lipid transfer protein GPI-anchored 22.